A 171-amino-acid chain; its full sequence is NRR repressor homolog 2 (171 aa).

The span at 1 to 12 (MEARLSTGEKTK) shows a compositional bias: basic and acidic residues. 3 disordered regions span residues 1 to 45 (MEAR…QQQM), 65 to 94 (AALP…APWR), and 119 to 143 (TTKG…EEDK). The span at 26-43 (PEEETAAETTTSEEEEQQ) shows a compositional bias: acidic residues.

The protein belongs to the NPR1-interactor family. Interacts with NPR1/NH1. Interacts with NPR3/NH3.

The protein localises to the nucleus. In terms of biological role, binds to and weakly represses NPR1/NH1-mediated transcriptional activation of LG2 in vitro. This chain is NRR repressor homolog 2, found in Oryza sativa subsp. japonica (Rice).